A 486-amino-acid chain; its full sequence is Glutamyl-tRNA(Gln) amidotransferase subunit A (486 aa).

Active-site charge relay system residues include K76 and S151. The active-site Acyl-ester intermediate is the S175.

This sequence belongs to the amidase family. GatA subfamily. As to quaternary structure, heterotrimer of A, B and C subunits.

The enzyme catalyses L-glutamyl-tRNA(Gln) + L-glutamine + ATP + H2O = L-glutaminyl-tRNA(Gln) + L-glutamate + ADP + phosphate + H(+). Functionally, allows the formation of correctly charged Gln-tRNA(Gln) through the transamidation of misacylated Glu-tRNA(Gln) in organisms which lack glutaminyl-tRNA synthetase. The reaction takes place in the presence of glutamine and ATP through an activated gamma-phospho-Glu-tRNA(Gln). The sequence is that of Glutamyl-tRNA(Gln) amidotransferase subunit A from Marinomonas sp. (strain MWYL1).